Here is a 254-residue protein sequence, read N- to C-terminus: Dihydroorotate dehydrogenase B (NAD(+)), electron transfer subunit (254 aa).

One can recognise an FAD-binding FR-type domain in the interval 1–99; sequence MLQTEMKVIQ…LGPLGKGFDI (99 aa). FAD-binding positions include 50 to 53, 67 to 69, and 74 to 75; these read RPIS, LYR, and GT. The [2Fe-2S] cluster site is built by Cys-218, Cys-223, Cys-226, and Cys-241.

This sequence belongs to the PyrK family. Heterotetramer of 2 PyrK and 2 PyrD type B subunits. It depends on [2Fe-2S] cluster as a cofactor. The cofactor is FAD.

Its pathway is pyrimidine metabolism; UMP biosynthesis via de novo pathway; orotate from (S)-dihydroorotate (NAD(+) route): step 1/1. Functionally, responsible for channeling the electrons from the oxidation of dihydroorotate from the FMN redox center in the PyrD type B subunit to the ultimate electron acceptor NAD(+). This is Dihydroorotate dehydrogenase B (NAD(+)), electron transfer subunit from Listeria welshimeri serovar 6b (strain ATCC 35897 / DSM 20650 / CCUG 15529 / CIP 8149 / NCTC 11857 / SLCC 5334 / V8).